Reading from the N-terminus, the 141-residue chain is Large ribosomal subunit protein uL22 (141 aa).

A disordered region spans residues K108–S141. The span at K117–K134 shows a compositional bias: low complexity.

The protein belongs to the universal ribosomal protein uL22 family. In terms of assembly, part of the 50S ribosomal subunit.

This protein binds specifically to 23S rRNA; its binding is stimulated by other ribosomal proteins, e.g. L4, L17, and L20. It is important during the early stages of 50S assembly. It makes multiple contacts with different domains of the 23S rRNA in the assembled 50S subunit and ribosome. Its function is as follows. The globular domain of the protein is located near the polypeptide exit tunnel on the outside of the subunit, while an extended beta-hairpin is found that lines the wall of the exit tunnel in the center of the 70S ribosome. The chain is Large ribosomal subunit protein uL22 from Campylobacter jejuni subsp. jejuni serotype O:2 (strain ATCC 700819 / NCTC 11168).